Consider the following 111-residue polypeptide: Large ribosomal subunit protein eL30 (111 aa).

Belongs to the eukaryotic ribosomal protein eL30 family.

This chain is Large ribosomal subunit protein eL30 (RPL30), found in Oryza sativa subsp. japonica (Rice).